Consider the following 418-residue polypeptide: Tyrosine--tRNA ligase (418 aa).

A 'HIGH' region motif is present at residues 42–51; it reads PTSPDLHLGH. The short motif at 226–230 is the 'KMSKS' region element; the sequence is KMSKS. Residue Lys-229 coordinates ATP. Residues 339-400 form the S4 RNA-binding domain; the sequence is VRLVALLTKS…GKRNFIKVRL (62 aa).

Belongs to the class-I aminoacyl-tRNA synthetase family. TyrS type 2 subfamily. As to quaternary structure, homodimer.

The protein localises to the cytoplasm. It catalyses the reaction tRNA(Tyr) + L-tyrosine + ATP = L-tyrosyl-tRNA(Tyr) + AMP + diphosphate + H(+). In terms of biological role, catalyzes the attachment of tyrosine to tRNA(Tyr) in a two-step reaction: tyrosine is first activated by ATP to form Tyr-AMP and then transferred to the acceptor end of tRNA(Tyr). This chain is Tyrosine--tRNA ligase, found in Xylella fastidiosa (strain Temecula1 / ATCC 700964).